A 428-amino-acid polypeptide reads, in one-letter code: Ammonium transporter AmtB (428 aa).

Residues 1–22 form the signal peptide; it reads MKIATIKTGLASLAMLPGLVMA. The Periplasmic portion of the chain corresponds to 23-32; the sequence is APAVADKADN. Residues 33-54 traverse the membrane as a helical segment; that stretch reads AFMMICTALVLFMTIPGIALFY. Over 55 to 65 the chain is Cytoplasmic; it reads GGLIRGKNVLS. Residues 66–90 traverse the membrane as a helical segment; sequence MLTQVTVTFALVCILWVVYGYSLAF. Residues 91–119 are Periplasmic-facing; that stretch reads GEGNNFFGNINWLMLKNIELTAVMGSIYQ. A helical membrane pass occupies residues 120–142; it reads YIHVAFQGSFACITVGLIVGALA. Residues 143-146 lie on the Cytoplasmic side of the membrane; sequence ERIR. A helical membrane pass occupies residues 147–171; it reads FSAVLIFVVVWLTLSYIPIAHMVWG. The Periplasmic segment spans residues 172-185; the sequence is GGLLASHGALDFAG. The helical transmembrane segment at 186–201 threads the bilayer; that stretch reads GTVVHINAAIAGLVGA. The Cytoplasmic segment spans residues 202 to 221; it reads YLIGKRVGFGKEAFKPHNLP. A helical transmembrane segment spans residues 222–241; sequence MVFTGTAILYIGWFGFNAGS. Ser-241 is a binding site for NH4(+). The Periplasmic portion of the chain corresponds to 242–248; sequence AGTANEI. A helical transmembrane segment spans residues 249-273; the sequence is AALAFVNTVVATAAAILGWIFGEWA. Residues 274 to 279 lie on the Cytoplasmic side of the membrane; sequence LRGKPS. The helical transmembrane segment at 280–300 threads the bilayer; sequence LLGACSGAIAGLVGVTPACGY. Topologically, residues 301-302 are periplasmic; it reads IG. A helical transmembrane segment spans residues 303–321; sequence VGGALIIGVVAGLAGLWGV. Residues 322 to 333 are Cytoplasmic-facing; that stretch reads TMLKRLLRVDDP. The chain crosses the membrane as a helical span at residues 334–355; it reads CDVFGVHGVCGIVGCIMTGIFA. The Periplasmic portion of the chain corresponds to 356-370; sequence ASSLGGVGFAEGVTM. The helical transmembrane segment at 371–399 threads the bilayer; sequence GHQLLVQLESIAITIVWSGVVAFIGYKLA. Residues 400–428 are Cytoplasmic-facing; it reads DLTVGLRVPEEQEREGLDVNSHGENAYNA.

This sequence belongs to the ammonia transporter channel (TC 1.A.11.2) family. In terms of assembly, homotrimer. In response to elevation of the extracellular ammonium concentration, interacts and forms a complex with GlnK.

The protein localises to the cell inner membrane. Its activity is regulated as follows. In the presence of high extracellular ammonium concentrations, transport activity is inhibited by interaction with the regulatory protein GlnK. Formation of the GlnK-AmtB complex is influenced by intracellular pools of the effector molecules ATP, ADP, Mg(2+) and 2-oxoglutarate. The GlnK-AmtB interaction is also controlled by the level of intracellular glutamine and the uridylylation status of GlnK. Its function is as follows. Involved in the uptake of ammonium/ammonia (NH(4)(+)/NH(3)). Transport is electrogenic. Following sequestration of NH(4)(+) at the periplasmic face, NH(4)(+) is deprotonated and neutral NH(3) is transported into the cytoplasm. Neutral NH(3) and charged H(+) are carried separately across the membrane on a unique two-lane pathway, before recombining to NH(4)(+) inside the cell. In Escherichia coli O157:H7, this protein is Ammonium transporter AmtB (amtB).